A 118-amino-acid polypeptide reads, in one-letter code: Putative ankyrin repeat protein R747 (118 aa).

Residues 70-99 (NCYYLLDYAIMKNDIPVIVTLIEKGANINR) form an ANK repeat.

This is Putative ankyrin repeat protein R747 from Acanthamoeba polyphaga (Amoeba).